The primary structure comprises 1641 residues: Vitellogenin-1 (1641 aa).

The signal sequence occupies residues 1–18 (MWYLAFLLIIGAYAADHA). One can recognise a Vitellogenin domain in the interval 19–790 (WETGNEYHYL…SQDTTVPKSS (772 aa)). A disulfide bridge links cysteine 172 with cysteine 211. A compositionally biased stretch (polar residues) spans 322–334 (LRQPSVSLNSMEA). The interval 322-372 (LRQPSVSLNSMEARSSENSNEENRSDDDRSNFLSNSGEEREYLQSKPTLNE) is disordered. Over residues 342 to 351 (EENRSDDDRS) the composition is skewed to basic and acidic residues. Asparagine 344, asparagine 549, asparagine 566, asparagine 831, asparagine 875, asparagine 898, asparagine 1001, asparagine 1053, asparagine 1268, asparagine 1393, asparagine 1396, asparagine 1505, and asparagine 1523 each carry an N-linked (GlcNAc...) asparagine glycan. The region spanning 1410-1597 (ESVCVLDKTH…TYAMTQESCQ (188 aa)) is the VWFD domain. Residues cysteine 1435 and cysteine 1596 are joined by a disulfide bond. Residues 1594 to 1641 (ESCQGPAPENKRKAEQSTCMSRSYRPSDVISDREAGRSSTKNRGWGYH) form a disordered region.

As to expression, hemolymph.

The protein resides in the secreted. Precursor of the egg-yolk proteins that are sources of nutrients during embryonic development. In Solenopsis invicta (Red imported fire ant), this protein is Vitellogenin-1.